Reading from the N-terminus, the 99-residue chain is uncharacterized protein (99 aa).

The protein resides in the mitochondrion. This is an uncharacterized protein from Marchantia polymorpha (Common liverwort).